The following is a 545-amino-acid chain: MALPSPASEEAEGPCQEANQEYQEPVCSPVPEPEPEPEPEPEPEPEPVPVPPPEPQPEPEPQPLPDPAPLPVLGFEAEPVQEPEPTPTVETRGTARGFQPPEGGFGWIVVFAATWCNGSIFGIHNSVGILYSMLLEEEKEKNRQVEFQAAWVGALAMGMIFFCSPIVSIFTDRLGCRITATTGAAVAFIGLHTSSFTSSLSLRYFTYGILFGCGCSFAFQPSLVILGHYFQRRLGLANGVVSAGSSIFSMSFPFLIKMLGDRIKLAQTFQVLSTFMFVLTLLSLTYRPLLPSSQDTPSKRGAHTLRQRFLVQFRKYFNMRVFRQRTYRIWAFGIAAAALGYFVPYVHLMKYVEDKFKEIKETWVLLVCIGATSGLGRLVSGHISDSIPGLKKIYLQVLSFLLLGLMSMMIPLCRDFGGLIVVCLFLGLCDGFFITIMAPIAFELVGPMQASQAIGYLLGMMALPMIAGPPIAGLLRNCFGNYHVAFYFAGVPPIIGAVILFFVPLMHQRMFKKEQRESSKDKMLSHDPDPNGELLPGSPTPEEPI.

The disordered stretch occupies residues 1–98; sequence MALPSPASEE…VETRGTARGF (98 aa). Alanine 2 is modified (N-acetylalanine). The Cytoplasmic portion of the chain corresponds to 2–102; the sequence is ALPSPASEEA…GTARGFQPPE (101 aa). 2 consecutive repeat copies span residues 29 to 50 and 51 to 72. The tract at residues 29–72 is 2 X 22 AA approximate tandem repeats; it reads PVPEPEPEPEPEPEPEPEPVPVPPPEPQPEPEPQPLPDPAPLPV. Acidic residues predominate over residues 33-45; it reads PEPEPEPEPEPEP. A compositionally biased stretch (pro residues) spans 46-70; it reads EPVPVPPPEPQPEPEPQPLPDPAPL. A helical membrane pass occupies residues 103 to 123; that stretch reads GGFGWIVVFAATWCNGSIFGI. Topologically, residues 124 to 149 are extracellular; the sequence is HNSVGILYSMLLEEEKEKNRQVEFQA. Residues 150–170 form a helical membrane-spanning segment; sequence AWVGALAMGMIFFCSPIVSIF. At 171-181 the chain is on the cytoplasmic side; sequence TDRLGCRITAT. The helical transmembrane segment at 182 to 202 threads the bilayer; sequence TGAAVAFIGLHTSSFTSSLSL. Residues 203–204 are Extracellular-facing; it reads RY. The helical transmembrane segment at 205-225 threads the bilayer; the sequence is FTYGILFGCGCSFAFQPSLVI. At 226–235 the chain is on the cytoplasmic side; the sequence is LGHYFQRRLG. A helical membrane pass occupies residues 236–256; the sequence is LANGVVSAGSSIFSMSFPFLI. At 257–264 the chain is on the extracellular side; sequence KMLGDRIK. Residues 265–285 form a helical membrane-spanning segment; the sequence is LAQTFQVLSTFMFVLTLLSLT. The Cytoplasmic segment spans residues 286-328; it reads YRPLLPSSQDTPSKRGAHTLRQRFLVQFRKYFNMRVFRQRTYR. A helical transmembrane segment spans residues 329–349; the sequence is IWAFGIAAAALGYFVPYVHLM. Over 350-362 the chain is Extracellular; the sequence is KYVEDKFKEIKET. Residues 363-383 form a helical membrane-spanning segment; the sequence is WVLLVCIGATSGLGRLVSGHI. The Cytoplasmic portion of the chain corresponds to 384-392; it reads SDSIPGLKK. Residues 393-413 form a helical membrane-spanning segment; that stretch reads IYLQVLSFLLLGLMSMMIPLC. Residues 414 to 415 lie on the Extracellular side of the membrane; it reads RD. The chain crosses the membrane as a helical span at residues 416 to 436; the sequence is FGGLIVVCLFLGLCDGFFITI. Topologically, residues 437–453 are cytoplasmic; it reads MAPIAFELVGPMQASQA. The helical transmembrane segment at 454 to 474 threads the bilayer; it reads IGYLLGMMALPMIAGPPIAGL. At 475 to 483 the chain is on the extracellular side; sequence LRNCFGNYH. The chain crosses the membrane as a helical span at residues 484-504; sequence VAFYFAGVPPIIGAVILFFVP. The Cytoplasmic segment spans residues 505 to 545; it reads LMHQRMFKKEQRESSKDKMLSHDPDPNGELLPGSPTPEEPI. Basic and acidic residues predominate over residues 514–529; it reads EQRESSKDKMLSHDPD. The disordered stretch occupies residues 514-545; the sequence is EQRESSKDKMLSHDPDPNGELLPGSPTPEEPI. At threonine 540 the chain carries Phosphothreonine.

Belongs to the major facilitator superfamily. Monocarboxylate porter (TC 2.A.1.13) family. In terms of assembly, monomer. Homodimer. Homooligomer. In terms of tissue distribution, expressed at highest levels in liver, lower levels in brain, kidney and heart (at protein level). Expressed in microvessels of the blood-brain barrier (BBB) (at protein level).

The protein localises to the cell membrane. It is found in the apical cell membrane. The catalysed reaction is 3,3',5-triiodo-L-thyronine(out) = 3,3',5-triiodo-L-thyronine(in). The enzyme catalyses 3,3',5'-triiodo-L-thyronine(out) = 3,3',5'-triiodo-L-thyronine(in). It carries out the reaction L-thyroxine(out) = L-thyroxine(in). It catalyses the reaction 3,3'-diiodo-L-thyronine(out) = 3,3'-diiodo-L-thyronine(in). Its function is as follows. Specific thyroid hormone transmembrane transporter, that mediates both uptake and efflux of thyroid hormone across the cell membrane independently of pH or a Na(+) gradient. Major substrates are the iodothyronines T3 and T4 and to a lesser extent rT3 and 3,3-diiodothyronine (3,3'-T2). Acts as an important mediator of thyroid hormone transport, especially T3, through the blood-brain barrier. The protein is Monocarboxylate transporter 8 (SLC16A2) of Rattus norvegicus (Rat).